We begin with the raw amino-acid sequence, 463 residues long: Retinoic acid receptor RXR-gamma (463 aa).

The modulating stretch occupies residues 1-138; the sequence is MYGNYSHFMK…TSPGSLVKHI (138 aa). Positions 18 to 53 are disordered; it reads SPGHTGSTSMSPSAALSTGKPMDSHPSYTDTPVSAP. The span at 21 to 33 shows a compositional bias: polar residues; the sequence is HTGSTSMSPSAAL. The segment at residues 136-211 is a DNA-binding region (nuclear receptor); that stretch reads KHICAICGDR…MGMKREAVQE (76 aa). 2 NR C4-type zinc fingers span residues 139-159 and 175-199; these read CAICGDRSSGKHYGVYSCEGC and CRDNKDCLIDKRQRNRCQYCRYQKC. The hinge stretch occupies residues 205-230; sequence KREAVQEERQRSRERAESEAECATSG. Residues 231 to 459 enclose the NR LBD domain; the sequence is HEDMPVERIL…TFLMEMLETP (229 aa).

The protein belongs to the nuclear hormone receptor family. NR2 subfamily. As to quaternary structure, homodimer. Heterodimer with a RAR molecule. Binds DNA preferentially as a RAR/RXR heterodimer. Interacts with RARA. Post-translationally, acetylated by EP300. In terms of tissue distribution, expressed in aortic endothelial cells (at protein level).

The protein localises to the nucleus. The protein resides in the cytoplasm. Its function is as follows. Receptor for retinoic acid. Retinoic acid receptors bind as heterodimers to their target response elements in response to their ligands, all-trans or 9-cis retinoic acid, and regulate gene expression in various biological processes. The RAR/RXR heterodimers bind to the retinoic acid response elements (RARE) composed of tandem 5'-AGGTCA-3' sites known as DR1-DR5. The high affinity ligand for RXRs is 9-cis retinoic acid. The polypeptide is Retinoic acid receptor RXR-gamma (RXRG) (Homo sapiens (Human)).